Here is a 208-residue protein sequence, read N- to C-terminus: MEGSNGSPRMSTEQENTEMHLIECMLKHFKIQKVAISNAIRSTFPFLESLRDREFITGKMYEDLLDSCRSLVPVDKVIYRALEELEKKFDMTVLCKLFNEVNMEKYPDLNLLRRSFECGAKPALKTMNSSSEHCNISDWLRLEATLKASVYMVAFSITTSLTIVIIAIVSQSLQLRKECFNPFVYGLHNRDLQSKLYPWLCCQKKLLP.

Residues 6-121 enclose the HSR domain; the sequence is GSPRMSTEQE…LRRSFECGAK (116 aa).

This chain is Component of Sp100-rs (Csprs), found in Mus musculus (Mouse).